Reading from the N-terminus, the 55-residue chain is Large ribosomal subunit protein bL33 (55 aa).

Positions 1–10 are enriched in basic and acidic residues; that stretch reads MAKGGREKIK. The interval 1 to 27 is disordered; that stretch reads MAKGGREKIKLQSTAGTGHFYTTDKNK.

The protein belongs to the bacterial ribosomal protein bL33 family.

This chain is Large ribosomal subunit protein bL33, found in Polaromonas naphthalenivorans (strain CJ2).